The sequence spans 215 residues: Methylthioribulose-1-phosphate dehydratase (215 aa).

Residues H103 and H105 each coordinate Zn(2+).

The protein belongs to the aldolase class II family. MtnB subfamily. Zn(2+) serves as cofactor.

The catalysed reaction is 5-(methylsulfanyl)-D-ribulose 1-phosphate = 5-methylsulfanyl-2,3-dioxopentyl phosphate + H2O. It functions in the pathway amino-acid biosynthesis; L-methionine biosynthesis via salvage pathway; L-methionine from S-methyl-5-thio-alpha-D-ribose 1-phosphate: step 2/6. Functionally, catalyzes the dehydration of methylthioribulose-1-phosphate (MTRu-1-P) into 2,3-diketo-5-methylthiopentyl-1-phosphate (DK-MTP-1-P). The chain is Methylthioribulose-1-phosphate dehydratase from Persephonella marina (strain DSM 14350 / EX-H1).